Reading from the N-terminus, the 392-residue chain is Protein PrgH (392 aa).

A helical transmembrane segment spans residues 142–162 (IVAALAGFFILGIGTVGTLWI).

It localises to the cell membrane. In terms of biological role, required for invasion of epithelial cells. In Salmonella typhimurium (strain LT2 / SGSC1412 / ATCC 700720), this protein is Protein PrgH (prgH).